A 218-amino-acid chain; its full sequence is Elongation factor Ts (218 aa).

An involved in Mg(2+) ion dislocation from EF-Tu region spans residues 82-85 (TDFV).

It belongs to the EF-Ts family.

It localises to the cytoplasm. Associates with the EF-Tu.GDP complex and induces the exchange of GDP to GTP. It remains bound to the aminoacyl-tRNA.EF-Tu.GTP complex up to the GTP hydrolysis stage on the ribosome. This Prochlorococcus marinus (strain MIT 9211) protein is Elongation factor Ts.